A 120-amino-acid polypeptide reads, in one-letter code: UPF0231 protein KPK_4613 (120 aa).

The protein belongs to the UPF0231 family.

The polypeptide is UPF0231 protein KPK_4613 (Klebsiella pneumoniae (strain 342)).